The sequence spans 176 residues: Avian agnoprotein 1a (176 aa).

2 disordered regions span residues 1–85 (MSTP…GKLE) and 116–176 (VYAA…RPAR). The span at 75–85 (YDRQNRFGKLE) shows a compositional bias: basic and acidic residues. A coiled-coil region spans residues 76 to 119 (DRQNRFGKLESEIRETKSQLETLRQELKHLQADVDDLKETVYAA). Over residues 137 to 161 (TPTATTPEASPAAPTTESTETTGPS) the composition is skewed to low complexity.

In terms of assembly, interacts with VP1.

It is found in the virion. It localises to the host nucleus. In Budgerigar fledgling disease virus (BFPyV), this protein is Avian agnoprotein 1a.